Here is a 402-residue protein sequence, read N- to C-terminus: Multidrug resistance protein MdtH (402 aa).

Residues 1–12 (MSRVSQARNLGK) are Cytoplasmic-facing. A helical transmembrane segment spans residues 13 to 33 (YFLLIDNMLVVLGFFVVFPLI). Residues 34–98 (SIRFVDQMGW…GFATMGIAHE (65 aa)) are Periplasmic-facing. A helical transmembrane segment spans residues 99 to 116 (PWLLWFSCFLSGLGGTLF). Residues 117–138 (DPPRSALVVKLIRPEQRGRFFS) lie on the Cytoplasmic side of the membrane. A helical membrane pass occupies residues 139 to 159 (LLMMQDSAGAVIGALLGSWLL). Over 160–164 (QYDFR) the chain is Periplasmic. Residues 165–185 (LVCATGAILFILCALFNAWLL) form a helical membrane-spanning segment. Residues 186-213 (PAWKLSTVRTPVREGMRRVMSDKRFVTY) are Cytoplasmic-facing. Residues 214-234 (VLTLAGYYMLAVQVMLMLPIM) form a helical membrane-spanning segment. Residues 235 to 243 (VNDIAGSPA) lie on the Periplasmic side of the membrane. A helical transmembrane segment spans residues 244-264 (AVKWMYAIEACLSLTLLYPIA). At 265–276 (RWSEKRFRLEHR) the chain is on the cytoplasmic side. Residues 277–297 (LMAGLLVMSLSMIPIGMVGNL) traverse the membrane as a helical segment. Topologically, residues 298–299 (QQ) are periplasmic. The helical transmembrane segment at 300 to 320 (LFTLICAFYIGSVIAEPARET) threads the bilayer. Residues 321–339 (LSASLADARARGSYMGFSR) are Cytoplasmic-facing. Residues 340-360 (LGLAIGGAIGYIGGGWLFDMG) traverse the membrane as a helical segment. Residues 361-367 (KALAQPE) are Periplasmic-facing. The chain crosses the membrane as a helical span at residues 368–388 (LPWMMLGIIGFITFLALGWQF). Over 389 to 402 (SHKRTPRRMLEPGA) the chain is Cytoplasmic.

The protein belongs to the major facilitator superfamily. DHA1 family. MdtH (TC 2.A.1.2.21) subfamily.

It localises to the cell inner membrane. The chain is Multidrug resistance protein MdtH from Salmonella schwarzengrund (strain CVM19633).